A 660-amino-acid polypeptide reads, in one-letter code: Arginine--tRNA ligase, cytoplasmic (660 aa).

N-acetylmethionine is present on M1. Residues 1–72 are could be involved in the assembly of the multisynthetase complex; the sequence is MDGLVAQCSA…QEERRKPTKN (72 aa). L-arginine contacts are provided by residues 200–202, H211, Y384, D388, and Q412; that span reads SPN. Positions 201 to 212 match the 'HIGH' region motif; that stretch reads PNIAKEMHVGHL. The tract at residues 529–543 is interaction with tRNA; sequence NTAAYLLYAFTRIRS.

The protein belongs to the class-I aminoacyl-tRNA synthetase family. As to quaternary structure, interacts (via N-terminus) with AIMP1 (via N-terminus); this stimulates its catalytic activity. Interacts (via N-terminus) with LARS2 (via C-terminus). Monomer. Part of a multisubunit complex that groups tRNA ligases for Arg (RARS1), Asp (DARS1), Gln (QARS1), Ile (IARS1), Leu (LARS1), Lys (KARS1), Met (MARS1) the bifunctional ligase for Glu and Pro (EPRS1) and the auxiliary subunits AIMP1/p43, AIMP2/p38 and EEF1E1/p18. Interacts with QARS1. Part of a complex composed of RARS1, QARS1 and AIMP1.

The protein localises to the cytoplasm. It localises to the cytosol. The enzyme catalyses tRNA(Arg) + L-arginine + ATP = L-arginyl-tRNA(Arg) + AMP + diphosphate. In terms of biological role, forms part of a macromolecular complex that catalyzes the attachment of specific amino acids to cognate tRNAs during protein synthesis. Modulates the secretion of AIMP1 and may be involved in generation of the inflammatory cytokine EMAP2 from AIMP1. The chain is Arginine--tRNA ligase, cytoplasmic (Rars1) from Mus musculus (Mouse).